Here is a 174-residue protein sequence, read N- to C-terminus: Small ribosomal subunit protein uS5 (174 aa).

One can recognise an S5 DRBM domain in the interval 19-82 (LREKMIAVNR…EQARRGMFKV (64 aa)).

The protein belongs to the universal ribosomal protein uS5 family. As to quaternary structure, part of the 30S ribosomal subunit. Contacts proteins S4 and S8.

In terms of biological role, with S4 and S12 plays an important role in translational accuracy. Functionally, located at the back of the 30S subunit body where it stabilizes the conformation of the head with respect to the body. The polypeptide is Small ribosomal subunit protein uS5 (Bordetella bronchiseptica (strain ATCC BAA-588 / NCTC 13252 / RB50) (Alcaligenes bronchisepticus)).